A 167-amino-acid polypeptide reads, in one-letter code: NADPH-dependent 7-cyano-7-deazaguanine reductase (167 aa).

A disordered region spans residues 1 to 24; it reads MTTRSQDQTRDLKVLGTGRLTSPE. C57 serves as the catalytic Thioimide intermediate. The active-site Proton donor is the D64. Substrate-binding positions include 79–81 and 98–99; these read VES and ME.

It belongs to the GTP cyclohydrolase I family. QueF type 1 subfamily.

Its subcellular location is the cytoplasm. It catalyses the reaction 7-aminomethyl-7-carbaguanine + 2 NADP(+) = 7-cyano-7-deazaguanine + 2 NADPH + 3 H(+). It functions in the pathway tRNA modification; tRNA-queuosine biosynthesis. Catalyzes the NADPH-dependent reduction of 7-cyano-7-deazaguanine (preQ0) to 7-aminomethyl-7-deazaguanine (preQ1). This Desulfovibrio desulfuricans (strain ATCC 27774 / DSM 6949 / MB) protein is NADPH-dependent 7-cyano-7-deazaguanine reductase.